A 338-amino-acid chain; its full sequence is 3-dehydroquinate synthase (338 aa).

It belongs to the archaeal-type DHQ synthase family.

It catalyses the reaction 2-amino-2,3,7-trideoxy-D-lyxo-hept-6-ulosonate + NAD(+) + H2O = 3-dehydroquinate + NH4(+) + NADH + H(+). Catalyzes the oxidative deamination and cyclization of 2-amino-3,7-dideoxy-D-threo-hept-6-ulosonic acid (ADH) to yield 3-dehydroquinate (DHQ), which is fed into the canonical shikimic pathway of aromatic amino acid biosynthesis. The chain is 3-dehydroquinate synthase from Cenarchaeum symbiosum (strain A).